A 367-amino-acid chain; its full sequence is Outer membrane porin C (367 aa).

An N-terminal signal peptide occupies residues 1–21 (MKVKVLSLLVPALLVAGAANA). Over 22–33 (AEVYNKDGNKLD) the chain is Periplasmic. A beta stranded membrane pass occupies residues 34-42 (LYGKVDGLH). Residues 43–53 (YFSDNKDVDGD) are Extracellular-facing. Residues 54–63 (QTYMRLGFKG) traverse the membrane as a beta stranded segment. Over 64–73 (ETQVTDQLTG) the chain is Periplasmic. The chain crosses the membrane as a beta stranded span at residues 74 to 84 (YGQWEYQIQGN). The Extracellular portion of the chain corresponds to 85–91 (SAENENN). Residues 92–101 (SWTRVAFAGL) form a beta stranded membrane-spanning segment. Topologically, residues 102 to 106 (KFQDV) are periplasmic. Residues 107–115 (GSFDYGRNY) traverse the membrane as a beta stranded segment. A loop L3; may constrict the pore region spans residues 116–133 (GVVYDVTSWTDVLPEFGG). The Extracellular portion of the chain corresponds to 116–141 (GVVYDVTSWTDVLPEFGGDTYGSDNF). Residues 142 to 154 (MQQRGNGFATYRN) traverse the membrane as a beta stranded segment. Residues 155–163 (TDFFGLVDG) are Periplasmic-facing. A beta stranded membrane pass occupies residues 164-171 (LNFAVQYQ). Topologically, residues 172–200 (GKNGNPSGEGFTSGVTNNGRDALRQNGDG) are extracellular. The beta stranded transmembrane segment at 201-207 (VGGSITY) threads the bilayer. Residues 208–211 (DYEG) lie on the Periplasmic side of the membrane. A beta stranded transmembrane segment spans residues 212–219 (FGIGGAIS). The Extracellular segment spans residues 220–241 (SSKRTDAQNTAAYIGNGDRAET). A beta stranded membrane pass occupies residues 242–248 (YTGGLKY). The Periplasmic portion of the chain corresponds to 249–252 (DANN). The beta stranded transmembrane segment at 253–260 (IYLAAQYT) threads the bilayer. Over 261–269 (QTYNATRVG) the chain is Extracellular. Residues 270-286 (SLGWANKAQNFEAVAQY) form a beta stranded membrane-spanning segment. At 287–291 (QFDFG) the chain is on the periplasmic side. Residues 292–299 (LRPSLAYL) traverse the membrane as a beta stranded segment. The Extracellular segment spans residues 300-318 (QSKGKNLGRGYDDEDILKY). Residues 319–326 (VDVGATYY) form a beta stranded membrane-spanning segment. Residues 327-330 (FNKN) are Periplasmic-facing. Residues 331 to 338 (MSTYVDYK) form a beta stranded membrane-spanning segment. Topologically, residues 339–358 (INLLDDNQFTRDAGINTDNI) are extracellular. Residues Asn-340, Leu-342, and Thr-355 each contribute to the Mg(2+) site. A beta stranded membrane pass occupies residues 359 to 366 (VALGLVYQ). A topological domain (periplasmic) is located at residue Phe-367.

The protein belongs to the Gram-negative porin family. Homotrimer. Forms mixed heterotrimers with OmpF and with PhoE; other mixed heterotrimers are also probable.

Its subcellular location is the cell outer membrane. Its function is as follows. Forms pores that allow passive diffusion of small molecules across the outer membrane. (Microbial infection) Supports colicin E5 entry in the absence of its major receptor OmpF. Functionally, (Microbial infection) A mixed OmpC-OmpF heterotrimer is the outer membrane receptor for toxin CdiA-EC536; polymorphisms in extracellular loops 4 and 5 of OmpC confer susceptibility to CdiA-EC536-mediated toxicity. This is Outer membrane porin C (ompC) from Escherichia coli (strain K12).